Here is a 339-residue protein sequence, read N- to C-terminus: Caspase drICE (339 aa).

Residues 1-28 (MDATNNGESADQVGIRVGNPEQPNDHTD) constitute a propeptide that is removed on maturation. The disordered stretch occupies residues 1 to 45 (MDATNNGESADQVGIRVGNPEQPNDHTDALGSVGSGGAGSSGLVA). Active-site residues include H169 and C211. Positions 218–230 (GGVTMQRSQTETD) are excised as a propeptide.

Belongs to the peptidase C14A family. In terms of assembly, heterotetramer that consists of two anti-parallel arranged heterodimers, each one formed by a 21 kDa (p21) and a 12 kDa (p12) subunit. Inactive pro-form can homodimerize. Dronc and Drice can form a stable complex. Interacts with Diap2 (via BIR3 domain) to form a stable complex. May interact with some isoforms of Dark.

Zymogen activated by proteolytic cleavage; cleaved by the initiator caspase Dronc upon apoptosis induction. Functionally, involved in the activation cascade of caspases responsible for apoptosis execution. Acts downstream of rpr. Cleaves baculovirus p35 and lamin DmO in vitro. The sequence is that of Caspase drICE (Drice) from Drosophila melanogaster (Fruit fly).